The primary structure comprises 349 residues: Dehydrogenase FPY6 (349 aa).

This sequence belongs to the Gfo/Idh/MocA family.

It functions in the pathway secondary metabolite biosynthesis. In terms of biological role, dehydrogenase; part of the gene cluster that mediates the biosynthesis of the gamma-pyrones fusapyrone (FPY) and deoxyfusapyrone (dFPY). FPY is an undecaketide and thus likely synthesized by the polyketide synthase FPY1 from acetyl-CoA functioning as starter unit and the addition of 10 malonyl-CoA extender units by successive Claisen-condensations. Next to this, FPY shares some rare features: C-glycosylated 4-deoxyglucose at C-3, a gem-dimethyl group at C-13, and an alpha-beta to beta-gamma double bond shift at C-20. During FPY biosynthesis mono-C-methyl groups are transferred to the tetra-, penta-, hexa- and heptaketide, while two C-methyl groups are transferred to the nonaketide, suggesting that the CMet domain is programmed to selectively catalyze two successive C-alpha-methylation reactions of the nonaketide, while other alpha-carbons are non- or mono-methylated only. While the origin of the 4'-deoxyglucose moiety remains opaque, its transfer to C-3 is most likely mediated by the C-glycosyltransferase FPY2. Next to this, the hydroxyl group present at C-33 and discriminating between FPY and dFPY, is likely to be installed by the cytochrome P450 monooxygenase FPY7. No putative function can be predicted for the remaining genes FPY3-FPY6. In Fusarium mangiferae (Mango malformation disease fungus), this protein is Dehydrogenase FPY6.